A 355-amino-acid polypeptide reads, in one-letter code: N-acetyl-gamma-glutamyl-phosphate reductase (355 aa).

The active site involves cysteine 152.

Belongs to the NAGSA dehydrogenase family. Type 1 subfamily.

It localises to the cytoplasm. The enzyme catalyses N-acetyl-L-glutamate 5-semialdehyde + phosphate + NADP(+) = N-acetyl-L-glutamyl 5-phosphate + NADPH + H(+). It functions in the pathway amino-acid biosynthesis; L-arginine biosynthesis; N(2)-acetyl-L-ornithine from L-glutamate: step 3/4. Its function is as follows. Catalyzes the NADPH-dependent reduction of N-acetyl-5-glutamyl phosphate to yield N-acetyl-L-glutamate 5-semialdehyde. This chain is N-acetyl-gamma-glutamyl-phosphate reductase, found in Psychrobacter arcticus (strain DSM 17307 / VKM B-2377 / 273-4).